The sequence spans 601 residues: Elongation factor 4 (601 aa).

The tr-type G domain maps to Ser6–Glu188. Residues Asp18 to Thr23 and Asn135 to Asp138 each bind GTP.

It belongs to the TRAFAC class translation factor GTPase superfamily. Classic translation factor GTPase family. LepA subfamily.

The protein localises to the cell inner membrane. It catalyses the reaction GTP + H2O = GDP + phosphate + H(+). In terms of biological role, required for accurate and efficient protein synthesis under certain stress conditions. May act as a fidelity factor of the translation reaction, by catalyzing a one-codon backward translocation of tRNAs on improperly translocated ribosomes. Back-translocation proceeds from a post-translocation (POST) complex to a pre-translocation (PRE) complex, thus giving elongation factor G a second chance to translocate the tRNAs correctly. Binds to ribosomes in a GTP-dependent manner. In Anaeromyxobacter sp. (strain K), this protein is Elongation factor 4.